Here is a 696-residue protein sequence, read N- to C-terminus: Phosphate acetyltransferase (696 aa).

The tract at residues 367–696 (FEHKLLEQAR…QSPHEKATAQ (330 aa)) is phosphate acetyltransferase.

The protein in the N-terminal section; belongs to the CobB/CobQ family. This sequence in the C-terminal section; belongs to the phosphate acetyltransferase and butyryltransferase family.

The protein resides in the cytoplasm. It catalyses the reaction acetyl-CoA + phosphate = acetyl phosphate + CoA. The protein operates within metabolic intermediate biosynthesis; acetyl-CoA biosynthesis; acetyl-CoA from acetate: step 2/2. Functionally, involved in acetate metabolism. The sequence is that of Phosphate acetyltransferase (pta) from Streptomyces avermitilis (strain ATCC 31267 / DSM 46492 / JCM 5070 / NBRC 14893 / NCIMB 12804 / NRRL 8165 / MA-4680).